The following is a 550-amino-acid chain: tRNA modification GTPase MnmE (550 aa).

(6S)-5-formyl-5,6,7,8-tetrahydrofolate-binding residues include Arg-20, Glu-78, and Arg-116. Residues 212–478 (GFSVVIVGKP…LLDKIFDIIS (267 aa)) enclose the TrmE-type G domain. Asn-222 contacts K(+). Residues 222 to 227 (NVGKST), 241 to 247 (TDIPGTT), and 266 to 269 (DTAG) contribute to the GTP site. Ser-226 contacts Mg(2+). 3 residues coordinate K(+): Thr-241, Ile-243, and Thr-246. Residue Thr-247 participates in Mg(2+) binding. Residue Lys-550 participates in (6S)-5-formyl-5,6,7,8-tetrahydrofolate binding.

Belongs to the TRAFAC class TrmE-Era-EngA-EngB-Septin-like GTPase superfamily. TrmE GTPase family. As to quaternary structure, homodimer. Heterotetramer of two MnmE and two MnmG subunits. It depends on K(+) as a cofactor.

The protein resides in the cytoplasm. In terms of biological role, exhibits a very high intrinsic GTPase hydrolysis rate. Involved in the addition of a carboxymethylaminomethyl (cmnm) group at the wobble position (U34) of certain tRNAs, forming tRNA-cmnm(5)s(2)U34. The protein is tRNA modification GTPase MnmE of Neorickettsia sennetsu (strain ATCC VR-367 / Miyayama) (Ehrlichia sennetsu).